Here is a 167-residue protein sequence, read N- to C-terminus: Small ribosomal subunit protein uS5 (167 aa).

The 64-residue stretch at 12 to 75 (LEDNVVAINR…EAARKNLIEV (64 aa)) folds into the S5 DRBM domain.

Belongs to the universal ribosomal protein uS5 family. Part of the 30S ribosomal subunit. Contacts proteins S4 and S8.

With S4 and S12 plays an important role in translational accuracy. In terms of biological role, located at the back of the 30S subunit body where it stabilizes the conformation of the head with respect to the body. This Levilactobacillus brevis (strain ATCC 367 / BCRC 12310 / CIP 105137 / JCM 1170 / LMG 11437 / NCIMB 947 / NCTC 947) (Lactobacillus brevis) protein is Small ribosomal subunit protein uS5.